A 634-amino-acid chain; its full sequence is DNA-directed RNA polymerase subunit gamma (634 aa).

Positions 74, 76, 89, and 92 each coordinate Zn(2+). Residues Asp-471, Asp-473, and Asp-475 each coordinate Mg(2+).

The protein belongs to the RNA polymerase beta' chain family. RpoC1 subfamily. As to quaternary structure, in cyanobacteria the RNAP catalytic core is composed of 2 alpha, 1 beta, 1 beta', 1 gamma and 1 omega subunit. When a sigma factor is associated with the core the holoenzyme is formed, which can initiate transcription. Mg(2+) is required as a cofactor. Zn(2+) serves as cofactor.

It catalyses the reaction RNA(n) + a ribonucleoside 5'-triphosphate = RNA(n+1) + diphosphate. Functionally, DNA-dependent RNA polymerase catalyzes the transcription of DNA into RNA using the four ribonucleoside triphosphates as substrates. This Parasynechococcus marenigrum (strain WH8102) protein is DNA-directed RNA polymerase subunit gamma.